The primary structure comprises 155 residues: Endoribonuclease YbeY (155 aa).

3 residues coordinate Zn(2+): His114, His118, and His124.

Belongs to the endoribonuclease YbeY family. It depends on Zn(2+) as a cofactor.

Its subcellular location is the cytoplasm. Its function is as follows. Single strand-specific metallo-endoribonuclease involved in late-stage 70S ribosome quality control and in maturation of the 3' terminus of the 16S rRNA. The polypeptide is Endoribonuclease YbeY (Escherichia coli O17:K52:H18 (strain UMN026 / ExPEC)).